A 101-amino-acid polypeptide reads, in one-letter code: MSKVIDQRRLADLIIKPIVTEKATLQLEDNKYVFDVRPEATKPEIKAAIELLFDVKVTGVNTARMPRRKKRVGRFMGFKAQVKRAVVTLKEGDSIQLFPDV.

Belongs to the universal ribosomal protein uL23 family. As to quaternary structure, part of the 50S ribosomal subunit. Contacts protein L29, and trigger factor when it is bound to the ribosome.

One of the early assembly proteins it binds 23S rRNA. One of the proteins that surrounds the polypeptide exit tunnel on the outside of the ribosome. Forms the main docking site for trigger factor binding to the ribosome. The sequence is that of Large ribosomal subunit protein uL23 from Synechocystis sp. (strain ATCC 27184 / PCC 6803 / Kazusa).